The primary structure comprises 228 residues: Phosphoribosylformylglycinamidine synthase subunit PurQ (228 aa).

A Glutamine amidotransferase type-1 domain is found at 3 to 225; sequence FAVLVFPGSN…LTTLKSGVVT (223 aa). C86 serves as the catalytic Nucleophile. Active-site residues include H194 and E196.

In terms of assembly, part of the FGAM synthase complex composed of 1 PurL, 1 PurQ and 2 PurS subunits.

Its subcellular location is the cytoplasm. The enzyme catalyses N(2)-formyl-N(1)-(5-phospho-beta-D-ribosyl)glycinamide + L-glutamine + ATP + H2O = 2-formamido-N(1)-(5-O-phospho-beta-D-ribosyl)acetamidine + L-glutamate + ADP + phosphate + H(+). The catalysed reaction is L-glutamine + H2O = L-glutamate + NH4(+). It functions in the pathway purine metabolism; IMP biosynthesis via de novo pathway; 5-amino-1-(5-phospho-D-ribosyl)imidazole from N(2)-formyl-N(1)-(5-phospho-D-ribosyl)glycinamide: step 1/2. In terms of biological role, part of the phosphoribosylformylglycinamidine synthase complex involved in the purines biosynthetic pathway. Catalyzes the ATP-dependent conversion of formylglycinamide ribonucleotide (FGAR) and glutamine to yield formylglycinamidine ribonucleotide (FGAM) and glutamate. The FGAM synthase complex is composed of three subunits. PurQ produces an ammonia molecule by converting glutamine to glutamate. PurL transfers the ammonia molecule to FGAR to form FGAM in an ATP-dependent manner. PurS interacts with PurQ and PurL and is thought to assist in the transfer of the ammonia molecule from PurQ to PurL. This is Phosphoribosylformylglycinamidine synthase subunit PurQ from Latilactobacillus sakei subsp. sakei (strain 23K) (Lactobacillus sakei subsp. sakei).